The primary structure comprises 406 residues: 3-oxoacyl-[acyl-carrier-protein] synthase 1 (406 aa).

The 403-residue stretch at 1-403 folds into the Ketosynthase family 3 (KS3) domain; sequence MKRAVITGLG…GTNATLVMRK (403 aa). Residues cysteine 163, histidine 298, and histidine 333 each act as for beta-ketoacyl synthase activity in the active site.

This sequence belongs to the thiolase-like superfamily. Beta-ketoacyl-ACP synthases family. Homodimer.

The protein resides in the cytoplasm. The enzyme catalyses a fatty acyl-[ACP] + malonyl-[ACP] + H(+) = a 3-oxoacyl-[ACP] + holo-[ACP] + CO2. The catalysed reaction is (3Z)-decenoyl-[ACP] + malonyl-[ACP] + H(+) = 3-oxo-(5Z)-dodecenoyl-[ACP] + holo-[ACP] + CO2. It participates in lipid metabolism; fatty acid biosynthesis. In terms of biological role, involved in the type II fatty acid elongation cycle. Catalyzes the elongation of a wide range of acyl-ACP by the addition of two carbons from malonyl-ACP to an acyl acceptor. Can also use unsaturated fatty acids. Catalyzes a key reaction in unsaturated fatty acid (UFA) synthesis, the elongation of the cis-3-decenoyl-ACP produced by FabA. The protein is 3-oxoacyl-[acyl-carrier-protein] synthase 1 (fabB) of Escherichia coli O6:H1 (strain CFT073 / ATCC 700928 / UPEC).